A 96-amino-acid polypeptide reads, in one-letter code: SAGA-associated factor 11 (96 aa).

The SGF11-type zinc finger occupies 68 to 89; the sequence is FHCKNCGRDVSANRFAAHLQRC.

The protein belongs to the SGF11 family. As to quaternary structure, component of the 1.8 MDa SAGA transcription coactivator-HAT complex. SAGA is built of 5 distinct domains with specialized functions. Within the SAGA complex, SUS1, SGF11, SGF73 and UBP8 form an additional subcomplex of SAGA called the DUB module (deubiquitination module). Interacts directly with SGF73, SUS1 and UBP8.

It is found in the nucleus. Functionally, functions as a component of the transcription regulatory histone acetylation (HAT) complex SAGA. At the promoters, SAGA is required for recruitment of the basal transcription machinery. It influences RNA polymerase II transcriptional activity through different activities such as TBP interaction and promoter selectivity, interaction with transcription activators, and chromatin modification through histone acetylation and deubiquitination. SAGA acetylates nucleosomal histone H3 to some extent (to form H3K9ac, H3K14ac, H3K18ac and H3K23ac). SAGA interacts with DNA via upstream activating sequences (UASs). Involved in transcriptional regulation of a subset of SAGA-regulated genes. Within the SAGA complex, participates in a subcomplex, that specifically deubiquitinates histones H2B. This chain is SAGA-associated factor 11, found in Vanderwaltozyma polyspora (strain ATCC 22028 / DSM 70294 / BCRC 21397 / CBS 2163 / NBRC 10782 / NRRL Y-8283 / UCD 57-17) (Kluyveromyces polysporus).